A 291-amino-acid chain; its full sequence is MTAFDADLRSLAAQTTLSRRTVIATSLATGFALAVQPVAAQTTIATDANGLIAGEVKIPMQDGVIPAYRAMPAEGGPFPTILVVQEIFGVHEHIKDVCRRLAKLGYFALAPELYARQGDVSTLTNIQQIVSEVVSKVPDAQVMSDLDAAVAFAKGTGKADTARLGITGFCWGGRITWLYAAHNPAVKAGVAWYGRLVGDSSALMPKNPVDVAADLKAPVLGLYGGADQGIPVATIDRMKEACRAAGKTCDFVVYPEAGHAFHADYRPSYRAEPAQDGWKRLQDWFRQYGVA.

An N-terminal signal peptide occupies residues 1-40 (MTAFDADLRSLAAQTTLSRRTVIATSLATGFALAVQPVAA). Catalysis depends on residues cysteine 170, aspartate 227, and histidine 259.

It belongs to the dienelactone hydrolase family.

The catalysed reaction is 2-(5-oxo-2,5-dihydrofuran-2-ylidene)acetate + H2O = 4-oxohex-2-enedioate + H(+). In Methylorubrum extorquens (strain ATCC 14718 / DSM 1338 / JCM 2805 / NCIMB 9133 / AM1) (Methylobacterium extorquens), this protein is Putative carboxymethylenebutenolidase.